Reading from the N-terminus, the 192-residue chain is Large ribosomal subunit protein uL6 (192 aa).

Belongs to the universal ribosomal protein uL6 family. As to quaternary structure, part of the 50S ribosomal subunit.

In terms of biological role, this protein binds to the 23S rRNA, and is important in its secondary structure. It is located near the subunit interface in the base of the L7/L12 stalk, and near the tRNA binding site of the peptidyltransferase center. This Nanoarchaeum equitans (strain Kin4-M) protein is Large ribosomal subunit protein uL6.